A 200-amino-acid polypeptide reads, in one-letter code: GTP cyclohydrolase 1 (200 aa).

Positions 87, 90, and 158 each coordinate Zn(2+).

It belongs to the GTP cyclohydrolase I family. Toroid-shaped homodecamer, composed of two pentamers of five dimers.

The enzyme catalyses GTP + H2O = 7,8-dihydroneopterin 3'-triphosphate + formate + H(+). It participates in cofactor biosynthesis; 7,8-dihydroneopterin triphosphate biosynthesis; 7,8-dihydroneopterin triphosphate from GTP: step 1/1. This Xanthomonas euvesicatoria pv. vesicatoria (strain 85-10) (Xanthomonas campestris pv. vesicatoria) protein is GTP cyclohydrolase 1.